We begin with the raw amino-acid sequence, 264 residues long: 3-methyl-2-oxobutanoate hydroxymethyltransferase (264 aa).

Asp-45 and Asp-84 together coordinate Mg(2+). 3-methyl-2-oxobutanoate contacts are provided by residues 45–46 (DS), Asp-84, and Lys-112. A Mg(2+)-binding site is contributed by Glu-114. Glu-181 (proton acceptor) is an active-site residue.

The protein belongs to the PanB family. In terms of assembly, homodecamer; pentamer of dimers. The cofactor is Mg(2+).

It is found in the cytoplasm. It carries out the reaction 3-methyl-2-oxobutanoate + (6R)-5,10-methylene-5,6,7,8-tetrahydrofolate + H2O = 2-dehydropantoate + (6S)-5,6,7,8-tetrahydrofolate. It participates in cofactor biosynthesis; (R)-pantothenate biosynthesis; (R)-pantoate from 3-methyl-2-oxobutanoate: step 1/2. Its function is as follows. Catalyzes the reversible reaction in which hydroxymethyl group from 5,10-methylenetetrahydrofolate is transferred onto alpha-ketoisovalerate to form ketopantoate. The chain is 3-methyl-2-oxobutanoate hydroxymethyltransferase from Photobacterium profundum (strain SS9).